Consider the following 23-residue polypeptide: Dermaseptin-4 (23 aa).

A Glutamine amide modification is found at Gln23.

In terms of tissue distribution, expressed by the skin glands.

Its subcellular location is the secreted. In terms of biological role, antimicrobial peptide, active against the Gram-positive bacterium S.aureus, and the Gram-negative bacteria E.coli and P.aeruginosa. Has hemolytic activity (5% hemolysis at 128 ug/ml). The sequence is that of Dermaseptin-4 from Phyllomedusa tarsius (Brownbelly leaf frog).